Here is a 535-residue protein sequence, read N- to C-terminus: Calcium-dependent protein kinase 7 (535 aa).

Residues 1-29 (MGNCCGNPSSATNQSKQGKPKNKNNPFYS) are disordered. A lipid anchor (N-myristoyl glycine) is attached at Gly2. Residues 59-317 (YDLGREVGRG…AAQVLEHTWI (259 aa)) form the Protein kinase domain. ATP is bound by residues 65–73 (VGRGEFGIT) and Lys88. The Proton acceptor role is filled by Asp183. Phosphoserine is present on Ser223. Positions 323–353 (APNVSLGETVKARLKQFSVMNKLKKRALRVI) are autoinhibitory domain. EF-hand domains are found at residues 360–395 (EEAA…AGQQ), 396–431 (IADT…LKKM), 432–467 (ANDE…ELDN), and 468–504 (TSSE…GTDW). 18 residues coordinate Ca(2+): Asp373, Asn375, Lys379, Glu384, Asp409, Asp411, Asp413, Thr415, Glu420, Asp445, Asn447, Ser449, Tyr451, Glu456, Asp482, Asp484, Asp486, and Arg488. Ser490 carries the post-translational modification Phosphoserine. A Ca(2+)-binding site is contributed by Glu493.

This sequence belongs to the protein kinase superfamily. Ser/Thr protein kinase family. CDPK subfamily.

It localises to the cell membrane. It carries out the reaction L-seryl-[protein] + ATP = O-phospho-L-seryl-[protein] + ADP + H(+). The catalysed reaction is L-threonyl-[protein] + ATP = O-phospho-L-threonyl-[protein] + ADP + H(+). Its activity is regulated as follows. Activated by calcium. Autophosphorylation may play an important role in the regulation of the kinase activity. May play a role in signal transduction pathways that involve calcium as a second messenger. The chain is Calcium-dependent protein kinase 7 (CPK7) from Arabidopsis thaliana (Mouse-ear cress).